We begin with the raw amino-acid sequence, 429 residues long: Putative GMP synthase [glutamine-hydrolyzing] (429 aa).

Positions 10–118 constitute a Glutamine amidotransferase type-1 domain; that stretch reads TIFILDFGSQ…GYTPIHLYPC (109 aa). Residue Cys87 is the Nucleophile of the active site. The region spanning 119–304 is the GMPS ATP-PPase domain; that stretch reads ELFKHIVDCE…LGLSSYLLDR (186 aa). Residues His176 and Glu178 contribute to the active site.

In terms of assembly, homodimer.

The enzyme catalyses XMP + L-glutamine + ATP + H2O = GMP + L-glutamate + AMP + diphosphate + 2 H(+). It participates in purine metabolism; GMP biosynthesis; GMP from XMP (L-Gln route): step 1/1. In terms of biological role, catalyzes the synthesis of GMP from XMP. In Chlamydia pneumoniae (Chlamydophila pneumoniae), this protein is Putative GMP synthase [glutamine-hydrolyzing] (guaA).